A 266-amino-acid polypeptide reads, in one-letter code: Bidirectional sugar transporter SWEET7b (266 aa).

Residues 1–9 (MVSPDLIRN) lie on the Extracellular side of the membrane. A helical membrane pass occupies residues 10-30 (MVGIVGNIISFGLFLSPVPTF). The MtN3/slv 1 domain occupies 10–97 (MVGIVGNIIS…TIFFLFSDKK (88 aa)). Over 31–45 (YRIIKNKDVQDFKAD) the chain is Cytoplasmic. The helical transmembrane segment at 46 to 66 (PYLATLLNCMLWVFYGLPIVH) threads the bilayer. At 67 to 69 (PNS) the chain is on the extracellular side. A helical membrane pass occupies residues 70–90 (ILVVTINGIGLIIEAVYLTIF). At 91–101 (FLFSDKKNKKK) the chain is on the cytoplasmic side. A helical membrane pass occupies residues 102 to 122 (MGVVLATEALFMAAVVLGVLL). Residues 123–131 (GAHTHQRRS) are Extracellular-facing. A helical membrane pass occupies residues 132 to 152 (LIVGILCAIFGTIMYSSPLTI). The MtN3/slv 2 domain maps to 133-216 (IVGILCAIFG…LILYAIYYRT (84 aa)). Topologically, residues 153–165 (MSQVVKTKSVEYM) are cytoplasmic. The helical transmembrane segment at 166-186 (PLLLSVVSFLNGLCWTSYALI) threads the bilayer. The Extracellular segment spans residues 187-189 (RLD). Residues 190–210 (IFITIPNGLGVLFALMQLILY) traverse the membrane as a helical segment. The Cytoplasmic segment spans residues 211–266 (AIYYRTTPKKQDKNLELPTVAPVAKDTSIVTPVSKDDDVVDGGNASHVTINITIEP).

It belongs to the SWEET sugar transporter family. Forms homooligomers and/or heterooligomers.

Its subcellular location is the cell membrane. Its function is as follows. Mediates both low-affinity uptake and efflux of sugar across the plasma membrane. In Oryza sativa subsp. indica (Rice), this protein is Bidirectional sugar transporter SWEET7b (SWEET7B).